Reading from the N-terminus, the 400-residue chain is Poly(A) polymerase type 3 (400 aa).

ATP-binding positions include 97–99, T106, 110–112, D164, K225, Y234, and 243–244; these read FGS, DID, and GV. Mg(2+) contacts are provided by D110, D112, and D164. The Nuclear localization signal signature appears at 382-390; sequence GEIINKNKK.

It belongs to the poly(A) polymerase family. Monomer. Mg(2+) serves as cofactor. Mn(2+) is required as a cofactor.

It is found in the nucleus. The catalysed reaction is RNA(n) + ATP = RNA(n)-3'-adenine ribonucleotide + diphosphate. Polymerase that creates the 3'-poly(A) tail of mRNA's. May acquire specificity through interaction with a cleavage and polyadenylation factor (CPSF). The chain is Poly(A) polymerase type 3 from Xenopus laevis (African clawed frog).